The sequence spans 147 residues: Hemoglobin subunit epsilon (147 aa).

The 145-residue stretch at 3–147 (HWSAEEKQLI…VAHALPRKYH (145 aa)) folds into the Globin domain. The heme b site is built by H64 and H93.

The protein belongs to the globin family. Heterotetramer of two epsilon chains and two alpha chains. Red blood cells.

In terms of biological role, beta-type chain found in early embryos. This Cairina moschata (Muscovy duck) protein is Hemoglobin subunit epsilon (HBE).